Consider the following 305-residue polypeptide: Short-chain dehydrogenase/reductase VdtF (305 aa).

Residues Leu-28 and Asn-98 each contribute to the NADP(+) site. Catalysis depends on Ser-192, which acts as the Proton donor. Positions 206, 210, and 241 each coordinate NADP(+). Tyr-206 functions as the Proton acceptor in the catalytic mechanism. Lys-210 serves as the catalytic Lowers pKa of active site Tyr.

Belongs to the short-chain dehydrogenases/reductases (SDR) family.

It carries out the reaction methyl 2-[(3S)-9,10-dihydroxy-7-methoxy-1-oxo-1H,3H,4H-naphtho[2,3-c]pyran-3-yl]acetate + AH2 = semiviriditoxin + A. The enzyme catalyses 9,10-dihydroxy-7-methoxy-3-(2-oxopropyl)-1H-benzo[g]isochromen-1-one + AH2 = (3S)-9,10-dihydroxy-7-methoxy-3-(2-oxopropyl)-1H,3H,4H-naphtho[2,3-c]pyran-1-one + A. It participates in secondary metabolite biosynthesis. In terms of biological role, short-chain dehydrogenase/reductase; part of the gene cluster that mediates the biosynthesis of viriditoxin, one of the 'classical' secondary metabolites produced by fungi and that has antibacterial activity. The first step is performed by the polyketide synthase VdtA which condenses one acetyl-CoA and 6 malonyl-CoA units to form the heptaketide monomer backbone of viriditoxin. The product of VdtA is then O-methylated on C7 by the O-methyltransferase VdtC. The O-methyl group is important for the stereoselective coupling of the monomers at the final step of viriditoxin biosynthesis. The short-chain dehydrogenase/reductase VdtF then acts as a stereospecific reductase converting the pyrone to dihydropyrone via the reduction of the C3-C4 double bond. The FAD-binding monooxygenase VdtE then converts the ketone group into a methyl-ester group to yield semi-viriditoxin. Finally, the laccase VdtB is involved in dimerization of 2 semi-viriditoxin molecules to yield the final viriditoxin. VdtB is responsible for the regioselective 6,6'-coupling of semi-viriditoxin, which yields (M)-viriditoxin and (P)-viriditoxin at a ratio of 1:2. The non-catalytic carboxylesterase-like protein VdtD affects the stereochemistical outcome of the coupling. The highly reducing polyketide synthase VdtX is not involved in viriditoxin synthesis, but might possibly play a role in the production of additional metabolites not identified yet. The chain is Short-chain dehydrogenase/reductase VdtF from Byssochlamys spectabilis (Paecilomyces variotii).